We begin with the raw amino-acid sequence, 103 residues long: Small ribosomal subunit protein bS18c (103 aa).

Belongs to the bacterial ribosomal protein bS18 family. As to quaternary structure, part of the 30S ribosomal subunit.

It is found in the plastid. It localises to the chloroplast. This chain is Small ribosomal subunit protein bS18c, found in Buxus microphylla (Littleleaf boxwood).